The primary structure comprises 520 residues: GMP synthase [glutamine-hydrolyzing] (520 aa).

Positions 9-202 constitute a Glutamine amidotransferase type-1 domain; that stretch reads TVLIVDFGSQ…VHKIAGIKGD (194 aa). Cysteine 86 (nucleophile) is an active-site residue. Active-site residues include histidine 176 and glutamate 178. In terms of domain architecture, GMPS ATP-PPase spans 203-395; that stretch reads WTMSAYRAKA…LGLPESFIGR (193 aa). 230 to 236 lines the ATP pocket; it reads SGGVDSS.

Homodimer.

The catalysed reaction is XMP + L-glutamine + ATP + H2O = GMP + L-glutamate + AMP + diphosphate + 2 H(+). Its pathway is purine metabolism; GMP biosynthesis; GMP from XMP (L-Gln route): step 1/1. Functionally, catalyzes the synthesis of GMP from XMP. The sequence is that of GMP synthase [glutamine-hydrolyzing] from Sinorhizobium fredii (strain NBRC 101917 / NGR234).